A 369-amino-acid chain; its full sequence is Anhydro-N-acetylmuramic acid kinase (369 aa).

G12–D19 serves as a coordination point for ATP.

It belongs to the anhydro-N-acetylmuramic acid kinase family.

The enzyme catalyses 1,6-anhydro-N-acetyl-beta-muramate + ATP + H2O = N-acetyl-D-muramate 6-phosphate + ADP + H(+). Its pathway is amino-sugar metabolism; 1,6-anhydro-N-acetylmuramate degradation. The protein operates within cell wall biogenesis; peptidoglycan recycling. Its function is as follows. Catalyzes the specific phosphorylation of 1,6-anhydro-N-acetylmuramic acid (anhMurNAc) with the simultaneous cleavage of the 1,6-anhydro ring, generating MurNAc-6-P. Is required for the utilization of anhMurNAc either imported from the medium or derived from its own cell wall murein, and thus plays a role in cell wall recycling. The polypeptide is Anhydro-N-acetylmuramic acid kinase (Shewanella baltica (strain OS185)).